The following is a 373-amino-acid chain: GDP-mannose 4,6-dehydratase (373 aa).

NADP(+) is bound by residues 9 to 14, 64 to 65, 86 to 90, and Y101; these read GVTGQD, DL, and LGAMS. T133 is a catalytic residue. Residues E135 and Y157 each act as nucleophile in the active site. Residues K161, H187, and R192 each coordinate NADP(+).

Belongs to the NAD(P)-dependent epimerase/dehydratase family. GDP-mannose 4,6-dehydratase subfamily. The cofactor is NADP(+).

The enzyme catalyses GDP-alpha-D-mannose = GDP-4-dehydro-alpha-D-rhamnose + H2O. It participates in nucleotide-sugar biosynthesis; GDP-L-fucose biosynthesis via de novo pathway; GDP-L-fucose from GDP-alpha-D-mannose: step 1/2. In terms of biological role, catalyzes the conversion of GDP-D-mannose to GDP-4-dehydro-6-deoxy-D-mannose. This chain is GDP-mannose 4,6-dehydratase, found in Escherichia coli O157:H7.